Reading from the N-terminus, the 346-residue chain is S-adenosylmethionine:tRNA ribosyltransferase-isomerase (346 aa).

It belongs to the QueA family. Monomer.

Its subcellular location is the cytoplasm. The catalysed reaction is 7-aminomethyl-7-carbaguanosine(34) in tRNA + S-adenosyl-L-methionine = epoxyqueuosine(34) in tRNA + adenine + L-methionine + 2 H(+). It functions in the pathway tRNA modification; tRNA-queuosine biosynthesis. Its function is as follows. Transfers and isomerizes the ribose moiety from AdoMet to the 7-aminomethyl group of 7-deazaguanine (preQ1-tRNA) to give epoxyqueuosine (oQ-tRNA). In Cereibacter sphaeroides (strain KD131 / KCTC 12085) (Rhodobacter sphaeroides), this protein is S-adenosylmethionine:tRNA ribosyltransferase-isomerase.